The primary structure comprises 137 residues: Holo-[acyl-carrier-protein] synthase (137 aa).

2 residues coordinate Mg(2+): Asp8 and Glu57.

This sequence belongs to the P-Pant transferase superfamily. AcpS family. Mg(2+) is required as a cofactor.

It localises to the cytoplasm. It carries out the reaction apo-[ACP] + CoA = holo-[ACP] + adenosine 3',5'-bisphosphate + H(+). Functionally, transfers the 4'-phosphopantetheine moiety from coenzyme A to a Ser of acyl-carrier-protein. This chain is Holo-[acyl-carrier-protein] synthase, found in Hyphomonas neptunium (strain ATCC 15444).